The sequence spans 173 residues: Shikimate kinase (173 aa).

Residue 14 to 19 (GAGKST) participates in ATP binding. Ser18 is a binding site for Mg(2+). Substrate contacts are provided by Asp36, Arg60, and Gly82. Arg120 is a binding site for ATP. Arg139 lines the substrate pocket. Gln156 provides a ligand contact to ATP.

The protein belongs to the shikimate kinase family. In terms of assembly, monomer. Requires Mg(2+) as cofactor.

The protein resides in the cytoplasm. The catalysed reaction is shikimate + ATP = 3-phosphoshikimate + ADP + H(+). It participates in metabolic intermediate biosynthesis; chorismate biosynthesis; chorismate from D-erythrose 4-phosphate and phosphoenolpyruvate: step 5/7. Functionally, catalyzes the specific phosphorylation of the 3-hydroxyl group of shikimic acid using ATP as a cosubstrate. This Actinobacillus pleuropneumoniae serotype 5b (strain L20) protein is Shikimate kinase.